The following is a 71-amino-acid chain: Translation initiation factor IF-1 (71 aa).

Residues 1–71 form the S1-like domain; the sequence is MSKQEMLSFS…LTKGRITFRG (71 aa).

Belongs to the IF-1 family. In terms of assembly, component of the 30S ribosomal translation pre-initiation complex which assembles on the 30S ribosome in the order IF-2 and IF-3, IF-1 and N-formylmethionyl-tRNA(fMet); mRNA recruitment can occur at any time during PIC assembly.

The protein localises to the cytoplasm. One of the essential components for the initiation of protein synthesis. Stabilizes the binding of IF-2 and IF-3 on the 30S subunit to which N-formylmethionyl-tRNA(fMet) subsequently binds. Helps modulate mRNA selection, yielding the 30S pre-initiation complex (PIC). Upon addition of the 50S ribosomal subunit IF-1, IF-2 and IF-3 are released leaving the mature 70S translation initiation complex. The protein is Translation initiation factor IF-1 of Pelagibacter ubique (strain HTCC1062).